Consider the following 399-residue polypeptide: Elongation factor Tu (399 aa).

Residues 10 to 204 (KPHVNIGTIG…SVDESIPEPE (195 aa)) form the tr-type G domain. Residues 19 to 26 (GHVDHGKT) form a G1 region. 19–26 (GHVDHGKT) is a binding site for GTP. Thr26 contacts Mg(2+). Residues 60–64 (GITIN) are G2. Residues 81 to 84 (DCPG) are G3. GTP is bound by residues 81–85 (DCPGH) and 136–139 (NKCD). The G4 stretch occupies residues 136 to 139 (NKCD). The G5 stretch occupies residues 174–176 (SAL).

The protein belongs to the TRAFAC class translation factor GTPase superfamily. Classic translation factor GTPase family. EF-Tu/EF-1A subfamily. In terms of assembly, monomer.

Its subcellular location is the cytoplasm. The catalysed reaction is GTP + H2O = GDP + phosphate + H(+). Functionally, GTP hydrolase that promotes the GTP-dependent binding of aminoacyl-tRNA to the A-site of ribosomes during protein biosynthesis. The protein is Elongation factor Tu of Prochlorococcus marinus (strain MIT 9211).